Reading from the N-terminus, the 155-residue chain is Large ribosomal subunit protein uL30 (155 aa).

This sequence belongs to the universal ribosomal protein uL30 family. In terms of assembly, part of the 50S ribosomal subunit.

This chain is Large ribosomal subunit protein uL30, found in Pyrococcus abyssi (strain GE5 / Orsay).